A 94-amino-acid chain; its full sequence is DNA-directed RNA polymerase subunit Rpo11 (94 aa).

This sequence belongs to the archaeal Rpo11/eukaryotic RPB11/RPC19 RNA polymerase subunit family. As to quaternary structure, part of the RNA polymerase complex.

Its subcellular location is the cytoplasm. The enzyme catalyses RNA(n) + a ribonucleoside 5'-triphosphate = RNA(n+1) + diphosphate. Its function is as follows. DNA-dependent RNA polymerase (RNAP) catalyzes the transcription of DNA into RNA using the four ribonucleoside triphosphates as substrates. The protein is DNA-directed RNA polymerase subunit Rpo11 of Natronomonas pharaonis (strain ATCC 35678 / DSM 2160 / CIP 103997 / JCM 8858 / NBRC 14720 / NCIMB 2260 / Gabara) (Halobacterium pharaonis).